A 620-amino-acid chain; its full sequence is Pentatricopeptide repeat-containing protein At5g66520 (620 aa).

PPR repeat units lie at residues 79–113 (DTFLWNLMIRGFSCSDEPERSLLLYQRMLCSSAPH), 114–148 (NAYTFPSLLKACSNLSAFEETTQIHAQITKLGYEN), 149–179 (DVYAVNSLINSYAVTGNFKLAHLLFDRIPEP), 180–210 (DDVSWNSVIKGYVKAGKMDIALTLFRKMAEK), 211–245 (NAISWTTMISGYVQADMNKEALQLFHEMQNSDVEP), 246–280 (DNVSLANALSACAQLGALEQGKWIHSYLNKTRIRM), 281–311 (DSVLGCVLIDMYAKCGEMEEALEVFKNIKKK), 312–346 (SVQAWTALISGYAYHGHGREAISKFMEMQKMGIKP), 347–382 (NVITFTAVLTACSYTGLVEEGKLIFYSMERDYNLKP), and 383–413 (TIEHYGCIVDLLGRAGLLDEAKRFIQEMPLK). Positions 418-493 (IWGALLKACR…VPGCSTISLE (76 aa)) are type E motif. Positions 494-524 (GTTHEFLAGDRSHPEIEKIQSKWRIMRRKLE) are type E(+) motif. The tract at residues 525-620 (ENGYVPELEE…DGKCSCGDYW (96 aa)) is type DYW motif.

This sequence belongs to the PPR family. PCMP-H subfamily.

The protein is Pentatricopeptide repeat-containing protein At5g66520 (PCMP-H61) of Arabidopsis thaliana (Mouse-ear cress).